We begin with the raw amino-acid sequence, 366 residues long: Terpene synthase 4 (366 aa).

The short motif at 91 to 96 (DDFLER) is the DDxx(x)D/E motif element. The NDxxSxxxD/E motif signature appears at 241 to 249 (NDCVSYAKE).

This sequence belongs to the terpene synthase family.

It carries out the reaction (2E,6E)-farnesyl diphosphate = (1S,2S,4R)-beta-elemene + diphosphate. Terpene synthase that converts its substrate farnesyl diphosphate (FPP) into the sesquiterpenes bicycloelemene, beta-elemene and 2 yet unidentified sesquiterpenes. This chain is Terpene synthase 4, found in Dictyostelium purpureum (Slime mold).